A 689-amino-acid polypeptide reads, in one-letter code: Pentatricopeptide repeat-containing protein At2g03380, mitochondrial (689 aa).

The N-terminal 12 residues, 1-12 (MLRSITLSPTRR), are a transit peptide targeting the mitochondrion. 16 PPR repeats span residues 75–105 (DISI…IPEP), 106–140 (DFYL…GFRY), 141–171 (DDIV…LVKV), 175–205 (DNVV…ITLR), 206–240 (NVVC…NVLG), 241–275 (NEYT…GIEL), 276–306 (SSCL…HSHV), 307–341 (DLVM…EIKP), 342–372 (NCVT…SIKV), 376–406 (DTNV…ESEK), 407–441 (DIVA…SVTP), 442–476 (NGVT…GFLA), 479–509 (SVHV…IEEK), 510–544 (NTIT…QQKP), 545–580 (NEST…NFTP), and 581–611 (STKH…MPIQ). The interval 616–689 (CFGAFLHGCG…SKIAGHSTME (74 aa)) is type E motif; degenerate.

The protein belongs to the PPR family. PCMP-E subfamily.

It localises to the mitochondrion. The polypeptide is Pentatricopeptide repeat-containing protein At2g03380, mitochondrial (PCMP-E47) (Arabidopsis thaliana (Mouse-ear cress)).